A 96-amino-acid chain; its full sequence is Large ribosomal subunit protein uL23 (96 aa).

This sequence belongs to the universal ribosomal protein uL23 family. In terms of assembly, part of the 50S ribosomal subunit. Contacts protein L29, and trigger factor when it is bound to the ribosome.

Functionally, one of the early assembly proteins it binds 23S rRNA. One of the proteins that surrounds the polypeptide exit tunnel on the outside of the ribosome. Forms the main docking site for trigger factor binding to the ribosome. The sequence is that of Large ribosomal subunit protein uL23 from Bacillus cereus (strain ATCC 10987 / NRS 248).